We begin with the raw amino-acid sequence, 320 residues long: GTP 3',8-cyclase (320 aa).

One can recognise a Radical SAM core domain in the interval 5-225 (QFGRKINYLR…IQLIKKDEKA (221 aa)). Residue Arg-14 participates in GTP binding. [4Fe-4S] cluster contacts are provided by Cys-21 and Cys-25. Tyr-27 is a binding site for S-adenosyl-L-methionine. Cys-28 provides a ligand contact to [4Fe-4S] cluster. Arg-64 contributes to the GTP binding site. S-adenosyl-L-methionine is bound at residue Gly-68. Residue Thr-95 participates in GTP binding. Ser-119 is a binding site for S-adenosyl-L-methionine. Lys-155 serves as a coordination point for GTP. Position 189 (Met-189) interacts with S-adenosyl-L-methionine. [4Fe-4S] cluster contacts are provided by Cys-248 and Cys-251. 253 to 255 (RIR) lines the GTP pocket. Position 265 (Cys-265) interacts with [4Fe-4S] cluster.

It belongs to the radical SAM superfamily. MoaA family. In terms of assembly, monomer and homodimer. [4Fe-4S] cluster serves as cofactor.

It carries out the reaction GTP + AH2 + S-adenosyl-L-methionine = (8S)-3',8-cyclo-7,8-dihydroguanosine 5'-triphosphate + 5'-deoxyadenosine + L-methionine + A + H(+). It participates in cofactor biosynthesis; molybdopterin biosynthesis. In terms of biological role, catalyzes the cyclization of GTP to (8S)-3',8-cyclo-7,8-dihydroguanosine 5'-triphosphate. This is GTP 3',8-cyclase from Campylobacter jejuni (strain RM1221).